A 336-amino-acid chain; its full sequence is Glyceraldehyde-3-phosphate dehydrogenase (336 aa).

NAD(+)-binding positions include 12-13 (RI), Asp34, Arg78, and Thr121. Residues 151 to 153 (SCT), Thr182, Arg199, 212 to 213 (TG), and Arg235 contribute to the D-glyceraldehyde 3-phosphate site. Cys152 serves as the catalytic Nucleophile. Asn316 is an NAD(+) binding site.

Belongs to the glyceraldehyde-3-phosphate dehydrogenase family. Homotetramer.

The protein localises to the cytoplasm. It carries out the reaction D-glyceraldehyde 3-phosphate + phosphate + NAD(+) = (2R)-3-phospho-glyceroyl phosphate + NADH + H(+). Its pathway is carbohydrate degradation; glycolysis; pyruvate from D-glyceraldehyde 3-phosphate: step 1/5. In terms of biological role, catalyzes the oxidative phosphorylation of glyceraldehyde 3-phosphate (G3P) to 1,3-bisphosphoglycerate (BPG) using the cofactor NAD. The first reaction step involves the formation of a hemiacetal intermediate between G3P and a cysteine residue, and this hemiacetal intermediate is then oxidized to a thioester, with concomitant reduction of NAD to NADH. The reduced NADH is then exchanged with the second NAD, and the thioester is attacked by a nucleophilic inorganic phosphate to produce BPG. The chain is Glyceraldehyde-3-phosphate dehydrogenase (gap) from Streptococcus pyogenes serotype M3 (strain ATCC BAA-595 / MGAS315).